The sequence spans 271 residues: MDLCNFYCCYLLKSNRTQSSGAVYIGSTPDPPRRLRQHNGEIVGGASKTKHGRPWSISCLVYGFPNKVSALKFEWNWQNLGISRYTKDCDFRSKKQKTIMYCLKGLKHLVDSDTWRRWPLNITFLNKTAFSKWNQLGKTYGNINVYFDEEWLNGFHEKVIQKTYDHKLCLRKTISEPVKCNLCYECIESDELRANCPFTDCNSINHLTCLASSFLTEECQVLPIEGMCTKCKRVLRWREFLSTVFTTSLETDERDFESENRIEIIDLELEK.

The GIY-YIG domain maps to 5 to 87; that stretch reads NFYCCYLLKS…QNLGISRYTK (83 aa). An SLX1-type zinc finger spans residues 180–231; the sequence is CNLCYECIESDELRANCPFTDCNSINHLTCLASSFLTEECQVLPIEGMCTKC.

It belongs to the SLX1 family. In terms of assembly, forms a heterodimer with slx4. The cofactor is Mg(2+). It depends on Mn(2+) as a cofactor.

The protein localises to the nucleus. Its subcellular location is the nucleolus. Catalytic subunit of the slx1-slx4 structure-specific endonuclease that resolves DNA secondary structures generated during DNA repair and recombination. Has endonuclease activity towards branched DNA substrates, introducing single-strand cuts in duplex DNA close to junctions with ss-DNA. Has a preference for stem-loop (SL) and splayed arm Y structures. Introduces a single-strand cut in duplex DNA on the 3' side of a double-strand/single-strand junction with respect to the single-strand moving 3' to 5' away from the junction. Plays a critical role in maintaining the integrity of the ribosomal DNA (rDNA) loci, where it has a role in re-starting stalled replication forks. The complex initiates homologous recombination (HR) events, used to maintain rDNA copy number, in the rDNA repeats that are processed by a mechanism that requires rad22, but not rhp51. It is also required for suppression of methyl methanesulfonate (MMS) and UV-C irradiation hypersensitivity of the structural maintenance of chromosome (SMC) protein mutant, smc6-74, by overexpression of brc1. Has Holliday junction resolvase activity in vitro. This is Structure-specific endonuclease subunit slx1 from Schizosaccharomyces pombe (strain 972 / ATCC 24843) (Fission yeast).